Here is a 109-residue protein sequence, read N- to C-terminus: Enhancer of rudimentary homolog (109 aa).

The protein belongs to the E(R) family. In terms of assembly, homodimer.

Its function is as follows. May have a role in the cell cycle. The protein is Enhancer of rudimentary homolog of Arabidopsis thaliana (Mouse-ear cress).